The sequence spans 479 residues: Signal recognition particle subunit SRP54 1 (479 aa).

A G-domain region spans residues Met-1 to Leu-295. GTP is bound by residues Gly-108 to Thr-115, Asp-190 to Arg-194, and Thr-248 to Asp-251. The interval Gly-296 to Lys-479 is M-domain.

The protein belongs to the GTP-binding SRP family. SRP54 subfamily. As to quaternary structure, component of a signal recognition particle (SRP) complex that consists of a 7SL RNA molecule of 300 nucleotides and six protein subunits: SRP72, SRP68, SRP54, SRP19, SRP14 and SRP9.

It is found in the cytoplasm. It localises to the endoplasmic reticulum. It carries out the reaction GTP + H2O = GDP + phosphate + H(+). Its function is as follows. Component of the signal recognition particle (SRP) complex, a ribonucleoprotein complex that mediates the cotranslational targeting of secretory and membrane proteins to the endoplasmic reticulum (ER). As part of the SRP complex, associates with the SRP receptor (SR) component SRPRA to target secretory proteins to the endoplasmic reticulum membrane. Binds to the signal sequence of presecretory proteins when they emerge from the ribosomes. Displays basal GTPase activity, and stimulates reciprocal GTPase activation of the SR subunit SRPRA. Forms a guanosine 5'-triphosphate (GTP)-dependent complex with the SR subunit SRPRA. SR compaction and GTPase mediated rearrangement of SR drive SRP-mediated cotranslational protein translocation into the ER. Requires the presence of SRP9/SRP14 and/or SRP19 to stably interact with RNA. The polypeptide is Signal recognition particle subunit SRP54 1 (SRP-54A) (Arabidopsis thaliana (Mouse-ear cress)).